Consider the following 543-residue polypeptide: CTP synthase (543 aa).

An amidoligase domain region spans residues 1 to 265 (MTRYIFVTGG…DDFVVERFGL (265 aa)). Residue Ser-13 participates in CTP binding. Position 13 (Ser-13) interacts with UTP. Residues 14–19 (SLGKGI) and Asp-71 contribute to the ATP site. Residues Asp-71 and Glu-139 each contribute to the Mg(2+) site. Residues 146 to 148 (DIE), 186 to 191 (KTKPTQ), and Lys-222 each bind CTP. Residues 186–191 (KTKPTQ) and Lys-222 contribute to the UTP site. The Glutamine amidotransferase type-1 domain maps to 290–541 (TIAMVGKYME…VKAALAQHQK (252 aa)). Gly-351 provides a ligand contact to L-glutamine. The active-site Nucleophile; for glutamine hydrolysis is Cys-378. Residues 379-382 (LGMQ), Glu-402, and Arg-469 contribute to the L-glutamine site. Active-site residues include His-514 and Glu-516.

This sequence belongs to the CTP synthase family. As to quaternary structure, homotetramer.

The catalysed reaction is UTP + L-glutamine + ATP + H2O = CTP + L-glutamate + ADP + phosphate + 2 H(+). The enzyme catalyses L-glutamine + H2O = L-glutamate + NH4(+). It carries out the reaction UTP + NH4(+) + ATP = CTP + ADP + phosphate + 2 H(+). Its pathway is pyrimidine metabolism; CTP biosynthesis via de novo pathway; CTP from UDP: step 2/2. With respect to regulation, allosterically activated by GTP, when glutamine is the substrate; GTP has no effect on the reaction when ammonia is the substrate. The allosteric effector GTP functions by stabilizing the protein conformation that binds the tetrahedral intermediate(s) formed during glutamine hydrolysis. Inhibited by the product CTP, via allosteric rather than competitive inhibition. In terms of biological role, catalyzes the ATP-dependent amination of UTP to CTP with either L-glutamine or ammonia as the source of nitrogen. Regulates intracellular CTP levels through interactions with the four ribonucleotide triphosphates. In Pseudomonas savastanoi pv. phaseolicola (strain 1448A / Race 6) (Pseudomonas syringae pv. phaseolicola (strain 1448A / Race 6)), this protein is CTP synthase.